Here is a 550-residue protein sequence, read N- to C-terminus: Probable acyl-activating enzyme 9 (550 aa).

This sequence belongs to the ATP-dependent AMP-binding enzyme family. Expressed in leaves, flowers and developing seeds.

Functionally, may act as an acid--thiol ligase that activates carboxylic acids by forming acyl-CoAs. This Arabidopsis thaliana (Mouse-ear cress) protein is Probable acyl-activating enzyme 9 (AEE9).